The chain runs to 87 residues: Mitochondrial import inner membrane translocase subunit TIM9 (87 aa).

The Twin CX3C motif signature appears at 35 to 59 (CFSDCVNDFTSSKLTSKEQTCIMRC). Disulfide bonds link Cys35–Cys59 and Cys39–Cys55.

The protein belongs to the small Tim family. In terms of assembly, heterohexamer; composed of 3 copies of TIM9 and 3 copies of TIM10, named soluble 70 kDa complex. Associates with the TIM22 complex, whose core is composed of TIM22 and TIM54. Interacts with the transmembrane regions of multi-pass transmembrane proteins in transit.

The protein resides in the mitochondrion inner membrane. In terms of biological role, mitochondrial intermembrane chaperone that participates in the import and insertion of multi-pass transmembrane proteins into the mitochondrial inner membrane. Also required for the transfer of beta-barrel precursors from the TOM complex to the sorting and assembly machinery (SAM complex) of the outer membrane. Acts as a chaperone-like protein that protects the hydrophobic precursors from aggregation and guide them through the mitochondrial intermembrane space. This is Mitochondrial import inner membrane translocase subunit TIM9 (TIM9) from Eremothecium gossypii (strain ATCC 10895 / CBS 109.51 / FGSC 9923 / NRRL Y-1056) (Yeast).